Consider the following 123-residue polypeptide: Maintenance of telomere capping protein 3, mitochondrial (123 aa).

The transit peptide at 1 to 37 directs the protein to the mitochondrion; it reads MMGRNGIRLALKRSFSTYQPPVVEITNITKLWPTLRP.

The protein resides in the mitochondrion. In terms of biological role, may be involved in telomere capping. The polypeptide is Maintenance of telomere capping protein 3, mitochondrial (MTC3) (Saccharomyces cerevisiae (strain ATCC 204508 / S288c) (Baker's yeast)).